The chain runs to 521 residues: Aldehyde dehydrogenase, mitochondrial (521 aa).

The N-terminal 21 residues, 1 to 21 (MLRPAALAAARLVLRQGRRLL), are a transit peptide targeting the mitochondrion. Positions 13 to 28 (VLRQGRRLLSAAPTQA) match the SIFI-degron motif. N6-acetyllysine is present on residues Lys56, Lys77, and Lys163. An NAD(+)-binding site is contributed by 266 to 271 (GSTEVG). Glu289 serves as the catalytic Proton acceptor. The active-site Nucleophile is Cys323. N6-acetyllysine is present on residues Lys372, Lys379, Lys387, Lys430, Lys432, Lys445, and Lys455.

It belongs to the aldehyde dehydrogenase family. As to quaternary structure, homotetramer. In terms of processing, in response to mitochondrial stress, the precursor protein is ubiquitinated by the SIFI complex in the cytoplasm before mitochondrial import, leading to its degradation. Within the SIFI complex, UBR4 initiates ubiquitin chain that are further elongated or branched by KCMF1.

The protein resides in the mitochondrion matrix. It catalyses the reaction an aldehyde + NAD(+) + H2O = a carboxylate + NADH + 2 H(+). It participates in alcohol metabolism; ethanol degradation; acetate from ethanol: step 2/2. Required for clearance of cellular formaldehyde, a cytotoxic and carcinogenic metabolite that induces DNA damage. This Sus scrofa (Pig) protein is Aldehyde dehydrogenase, mitochondrial (ALDH2).